We begin with the raw amino-acid sequence, 174 residues long: MIEAQVGRRYAEAIYEIAESNDNVKELYETLNGVMELYNTDKEFKTLVDHPLIKREDKKEFAKKIFGELEESSLNIIFYLIEKDRLSSIRGIVAEYLKIYYAKNQILDVEAIFAIEPTKDQKAKLIEQLEKKTGKKVNLEVSIDKSIIAGGIIKIGDEIIDGSVRRQLDTIARS.

The protein belongs to the ATPase delta chain family. In terms of assembly, F-type ATPases have 2 components, F(1) - the catalytic core - and F(0) - the membrane proton channel. F(1) has five subunits: alpha(3), beta(3), gamma(1), delta(1), epsilon(1). F(0) has three main subunits: a(1), b(2) and c(10-14). The alpha and beta chains form an alternating ring which encloses part of the gamma chain. F(1) is attached to F(0) by a central stalk formed by the gamma and epsilon chains, while a peripheral stalk is formed by the delta and b chains.

It localises to the cell inner membrane. In terms of biological role, f(1)F(0) ATP synthase produces ATP from ADP in the presence of a proton or sodium gradient. F-type ATPases consist of two structural domains, F(1) containing the extramembraneous catalytic core and F(0) containing the membrane proton channel, linked together by a central stalk and a peripheral stalk. During catalysis, ATP synthesis in the catalytic domain of F(1) is coupled via a rotary mechanism of the central stalk subunits to proton translocation. Its function is as follows. This protein is part of the stalk that links CF(0) to CF(1). It either transmits conformational changes from CF(0) to CF(1) or is implicated in proton conduction. The chain is ATP synthase subunit delta, sodium ion specific from Propionigenium modestum.